A 490-amino-acid chain; its full sequence is Protein lag-3 (490 aa).

Disordered stretches follow at residues 18 to 55, 105 to 155, 213 to 235, 307 to 362, and 391 to 490; these read PSVAGMKPSTSKTTHSPPPEEPTAPFVNDNLPNPEDEP, EDEE…PTSE, SSADSIRSVPTPASSMHQPSPAE, SSSE…MQRI, and QQQQ…ANIN. Basic and acidic residues predominate over residues 105–119; the sequence is EDEERKRVEQQKNKE. A compositionally biased stretch (polar residues) spans 122–138; sequence NASTSAPTSSRNGGQSV. Positions 307-318 are enriched in polar residues; the sequence is SSSESPTKQSPM. 3 stretches are compositionally biased toward low complexity: residues 341 to 359, 391 to 404, and 413 to 456; these read QLQQQQNKMRLMQQQQQEM, QQQQQQQMQQHHQM, and QAHQ…HHQM.

As to quaternary structure, component of a complex consisting of at least a lin-12/Notch intracellular domain (NICD), lag-1, and lag-3. Interacts with a NICD of lin-12/Notch or glp-1/Notch; the interactions are direct. Expressed in the progenitor zone and the early pachytene region of the hermaphrodite gonad.

Its subcellular location is the nucleus. Functionally, glp-1/Notch and lin-12/Notch proteins promote signaling by recruiting lag-3 to target promoters, where it functions as a transcriptional activator, probably as part of a complex with a Notch intracellular domain (NICD) and the transcription regulator lag-1. Involved in the p53-mediated germ-cell apoptotic response to DNA damage, perhaps acting as a transcriptional activator. May regulate phosphatase lip-1 mRNA transcription downstream of glp-1. This Caenorhabditis elegans protein is Protein lag-3 (sel-8).